A 432-amino-acid polypeptide reads, in one-letter code: Enolase (432 aa).

A (2R)-2-phosphoglycerate-binding site is contributed by glutamine 167. Catalysis depends on glutamate 209, which acts as the Proton donor. Mg(2+) is bound by residues aspartate 246, glutamate 290, and aspartate 317. Lysine 342, arginine 371, serine 372, and lysine 393 together coordinate (2R)-2-phosphoglycerate. The active-site Proton acceptor is the lysine 342.

The protein belongs to the enolase family. In terms of assembly, component of the RNA degradosome, a multiprotein complex involved in RNA processing and mRNA degradation. Mg(2+) serves as cofactor.

It is found in the cytoplasm. Its subcellular location is the secreted. The protein localises to the cell surface. The catalysed reaction is (2R)-2-phosphoglycerate = phosphoenolpyruvate + H2O. It participates in carbohydrate degradation; glycolysis; pyruvate from D-glyceraldehyde 3-phosphate: step 4/5. Its function is as follows. Catalyzes the reversible conversion of 2-phosphoglycerate (2-PG) into phosphoenolpyruvate (PEP). It is essential for the degradation of carbohydrates via glycolysis. The sequence is that of Enolase from Salmonella agona (strain SL483).